Reading from the N-terminus, the 115-residue chain is uncharacterized protein (115 aa).

Residues 9–30 are disordered; sequence EGLRERGASGKNEQKKKKKEKI.

This is an uncharacterized protein from Saccharomyces cerevisiae (strain ATCC 204508 / S288c) (Baker's yeast).